Reading from the N-terminus, the 364-residue chain is DNA polymerase IV (364 aa).

The 182-residue stretch at 8–189 (IIHIDMDCYF…LPLTKIPGVG (182 aa)) folds into the UmuC domain. Mg(2+) is bound by residues Asp-12 and Asp-107. Residue Glu-108 is part of the active site.

Belongs to the DNA polymerase type-Y family. Monomer. The cofactor is Mg(2+).

It is found in the cytoplasm. The catalysed reaction is DNA(n) + a 2'-deoxyribonucleoside 5'-triphosphate = DNA(n+1) + diphosphate. Poorly processive, error-prone DNA polymerase involved in untargeted mutagenesis. Copies undamaged DNA at stalled replication forks, which arise in vivo from mismatched or misaligned primer ends. These misaligned primers can be extended by PolIV. Exhibits no 3'-5' exonuclease (proofreading) activity. May be involved in translesional synthesis, in conjunction with the beta clamp from PolIII. In Shewanella woodyi (strain ATCC 51908 / MS32), this protein is DNA polymerase IV.